We begin with the raw amino-acid sequence, 129 residues long: Fluoride-specific ion channel FluC (129 aa).

Transmembrane regions (helical) follow at residues 20 to 40 (WFLG…TLAA), 67 to 87 (LLII…TAEI), and 96 to 116 (IMTA…MMLL). Na(+) is bound by residues glycine 75 and threonine 78.

The protein belongs to the fluoride channel Fluc/FEX (TC 1.A.43) family.

The protein localises to the cell inner membrane. The catalysed reaction is fluoride(in) = fluoride(out). Its activity is regulated as follows. Na(+) is not transported, but it plays an essential structural role and its presence is essential for fluoride channel function. Functionally, fluoride-specific ion channel. Important for reducing fluoride concentration in the cell, thus reducing its toxicity. This Desulfovibrio desulfuricans (strain ATCC 27774 / DSM 6949 / MB) protein is Fluoride-specific ion channel FluC.